Consider the following 152-residue polypeptide: Small ribosomal subunit protein uS9 (152 aa).

Belongs to the universal ribosomal protein uS9 family.

The sequence is that of Small ribosomal subunit protein uS9 from Mycobacterium ulcerans (strain Agy99).